Here is a 449-residue protein sequence, read N- to C-terminus: Myb-related protein Pp1 (449 aa).

An HTH myb-type domain is found at 1–30; sequence LGNRWSAIAIPRRTDNEIKNYWNTHLKKRL. The segment at residues 5 to 26 is a DNA-binding region (H-T-H motif); the sequence is WSAIAIPRRTDNEIKNYWNTHL.

It is found in the nucleus. Possible transcription activator. The protein is Myb-related protein Pp1 (PP1) of Physcomitrium patens (Spreading-leaved earth moss).